The following is a 783-amino-acid chain: Tricorn protease-interacting factor F2 (783 aa).

Substrate is bound by residues Glu107 and 236–240 (GAMEN). His271 serves as a coordination point for Zn(2+). The active-site Proton acceptor is the Glu272. 2 residues coordinate Zn(2+): His275 and Glu294.

This sequence belongs to the peptidase M1 family. In terms of assembly, monomer. Part of the Tricorn proteolytic complex. Requires Zn(2+) as cofactor.

The protein resides in the cytoplasm. Proteases F1, F2 and F3 degrade oligopeptides produced by Tricorn (themselves probably produced by the proteasome), yielding free amino acids. This is Tricorn protease-interacting factor F2 (trf2) from Thermoplasma acidophilum (strain ATCC 25905 / DSM 1728 / JCM 9062 / NBRC 15155 / AMRC-C165).